The following is a 254-amino-acid chain: Nickel import ATP-binding protein NikD (254 aa).

The 240-residue stretch at 2 to 241 (PQQIELRNIA…PKHTVTRSLV (240 aa)) folds into the ABC transporter domain. 36-43 (GGSGSGKS) provides a ligand contact to ATP.

It belongs to the ABC transporter superfamily. Nickel importer (TC 3.A.1.5.3) family. As to quaternary structure, the complex is composed of two ATP-binding proteins (NikD and NikE), two transmembrane proteins (NikB and NikC) and a solute-binding protein (NikA).

Its subcellular location is the cell inner membrane. The catalysed reaction is Ni(2+)(out) + ATP + H2O = Ni(2+)(in) + ADP + phosphate + H(+). In terms of biological role, part of the ABC transporter complex NikABCDE involved in nickel import. Responsible for energy coupling to the transport system. The sequence is that of Nickel import ATP-binding protein NikD from Shigella boydii serotype 4 (strain Sb227).